Consider the following 551-residue polypeptide: Probable inorganic carbon transporter subunit DabB2 (551 aa).

Helical transmembrane passes span 6 to 26 (SHTTGLLLLAMPALLLMAAVI), 42 to 62 (VQWTSFAAFGLALLAVVSFLF), 65 to 85 (QQNLMLGAGSLPAGLGLLALS), 86 to 106 (IQVNGLTLVLASLVSFVLSVI), 132 to 152 (GFFLLVVISGNLGLFTLAIIA), 187 to 207 (LLLAATVLIGHQIGSLEFSQI), 217 to 237 (LSIALHVAAWLIVLAAILKSA), 252 to 272 (PTPVSALMHAGVVYSGAIIVL), 284 to 304 (ALLLLALIGLMTLAIGSLVML), 321 to 341 (LGFMMLELGLGLFGLALLHLV), 374 to 394 (VVAWFTTVIVSGLFTLGIAAA), 404 to 424 (MLPAVLTIIALATAQLMLKAL), 434 to 454 (VAAGAAIAMTGVYVFLHEVFI), and 469 to 489 (PLLDLLLMAITIITFLFVAWL).

It belongs to the inorganic carbon transporter (TC 9.A.2) DabB family. Forms a complex with DabA2, possibly a heterodimer.

Its subcellular location is the cell inner membrane. With respect to regulation, uptake of inorganic carbon by cells in the presence of thiosulphate is fully inhibited by the uncouplers carbonyl cyanide m-chlorophenyl hydrazone (CCCP), carbonyl cyanide p-trifluoromethoxyphenyl hydrazone (FCCP), S13 or SF6847. Not inhibited by the ATPase inhibitor N,N-dicyclohexylcarbodiimide (DCCD). Inorganic carbon uptake is inhibited by the ionophore carbonyl cyanide m-chlorophenyl hydrazone (CCCP), suggesting uptake is coupled to a cation gradient. Part of an energy-coupled inorganic carbon pump; its substrate may be carbon dioxide. Expression of both dabA2 and dabB2 (DAB2) restores growth in ambient air to E.coli deleted of its carbonic anhydrase genes (called CAfree, deletion of 'can' and 'cynT'); neither dabA2 or dabB2 alone is sufficient. Rescue is pH-independent, suggesting it transports CO(2) and not carbonate ions. Together the genes allow greater than normal uptake of inorganic carbon by E.coli. Uptake of carbon dioxide rather than bicarbonate has been suggested based on kinetic calculations. This Halothiobacillus neapolitanus (strain ATCC 23641 / c2) (Thiobacillus neapolitanus) protein is Probable inorganic carbon transporter subunit DabB2.